A 151-amino-acid chain; its full sequence is UPF0178 protein amb2838 (151 aa).

This sequence belongs to the UPF0178 family.

The protein is UPF0178 protein amb2838 of Paramagnetospirillum magneticum (strain ATCC 700264 / AMB-1) (Magnetospirillum magneticum).